We begin with the raw amino-acid sequence, 220 residues long: Large ribosomal subunit protein eL15 (220 aa).

The protein belongs to the eukaryotic ribosomal protein eL15 family.

This Staphylothermus marinus (strain ATCC 43588 / DSM 3639 / JCM 9404 / F1) protein is Large ribosomal subunit protein eL15.